Consider the following 876-residue polypeptide: Valine--tRNA ligase (876 aa).

A 'HIGH' region motif is present at residues 44–54 (PNVTGKLHLGH). The 'KMSKS' region motif lies at 520–524 (KMSKS). Lys523 is an ATP binding site. Residues 806–876 (EGLIDMDKEI…VKLRINQLKA (71 aa)) adopt a coiled-coil conformation.

This sequence belongs to the class-I aminoacyl-tRNA synthetase family. ValS type 1 subfamily. As to quaternary structure, monomer.

It localises to the cytoplasm. It catalyses the reaction tRNA(Val) + L-valine + ATP = L-valyl-tRNA(Val) + AMP + diphosphate. In terms of biological role, catalyzes the attachment of valine to tRNA(Val). As ValRS can inadvertently accommodate and process structurally similar amino acids such as threonine, to avoid such errors, it has a 'posttransfer' editing activity that hydrolyzes mischarged Thr-tRNA(Val) in a tRNA-dependent manner. The chain is Valine--tRNA ligase from Staphylococcus saprophyticus subsp. saprophyticus (strain ATCC 15305 / DSM 20229 / NCIMB 8711 / NCTC 7292 / S-41).